The primary structure comprises 365 residues: MKNVGETGPGKCQLLRCPAAGCKAFYRKEGKLQDHMAGHSEQKPWKCGIKDCDKVFARKRQILKHVKRHLALKKLSCPTAGCKMTFSTKKSLSRHKLYKHGEAVPLKCFVPGCKRSFRKKRALRRHLSVHSNEPLSVCDVPGCSWKSSSVAKLVAHQKRHRGYRCSYEGCQTVSPTWTALQTHVKKHPLELQCAACKKPFKKASALRRHKATHAKKPLQLPCPRQDCDKTFSSVFNLTHHVRKLHLCLQTHRCPHSGCTRSFAMRESLLRHLVVHDPERKKLKLKFVRGPSKFLGRGTRCRTPVVEEDLSHLFSRKLLFHFKTRLETNLSGLFNERQLREPAEPEVNLSGLFQRPQGRAKAEKSA.

9 C2H2-type zinc fingers span residues 15–39 (LRCP…MAGH), 45–69 (WKCG…VKRH), 75–100 (LSCP…LYKH), 106–130 (LKCF…LSVH), 136–160 (SVCD…QKRH), 163–187 (YRCS…VKKH), 191–213 (LQCA…KATH), 220–245 (LPCP…RKLH), and 251–275 (HRCP…LVVH).

The 42S RNP particle comprises four subunits each of which contains one molecule of 5S RNA, three molecules of tRNA, two molecules of p50 (EF1-alpha) and one molecule of the 5S RNA binding protein 43.

Functionally, p43 is a 5S RNA binding protein which is a major constituent of oocytes and comprises part of a 42S ribonucleoprotein storage particle. The sequence is that of P43 5S RNA-binding protein from Xenopus laevis (African clawed frog).